Here is an 85-residue protein sequence, read N- to C-terminus: Large ribosomal subunit protein bL27 (85 aa).

The tract at residues 1 to 21 (MAHKKAGGSTRNGRDSESKRL) is disordered.

It belongs to the bacterial ribosomal protein bL27 family.

The polypeptide is Large ribosomal subunit protein bL27 (Pseudomonas entomophila (strain L48)).